The primary structure comprises 837 residues: Protein kintoun (837 aa).

Disordered regions lie at residues 100–119 (APSS…GSHW), 205–224 (LPGV…LPDF), 230–249 (YPAA…LQPA), and 363–515 (AAAP…GPGT). Residues 233 to 242 (APGPRAPSPP) show a composition bias toward pro residues. Residues 428 to 442 (GEERVPKPGEQDLSR) are compositionally biased toward basic and acidic residues. Residues 445 to 459 (GSPPGSVEEPSPGGE) are compositionally biased toward low complexity. A phosphoserine mark is found at Ser461 and Ser467. Residues 484-498 (ESARGDSSVETREES) show a composition bias toward basic and acidic residues. 3 positions are modified to phosphoserine: Ser640, Ser641, and Ser773.

It belongs to the PIH1 family. Kintoun subfamily. As to quaternary structure, interacts with CFAP300. Interacts with DNAAF4. Interacts with DNAAF6/PIH1D3. Interacts with DNAI2 and HSPA1A.

It is found in the cytoplasm. Its subcellular location is the dynein axonemal particle. In terms of biological role, required for cytoplasmic pre-assembly of axonemal dyneins, thereby playing a central role in motility in cilia and flagella. Involved in pre-assembly of dynein arm complexes in the cytoplasm before intraflagellar transport loads them for the ciliary compartment. The chain is Protein kintoun from Homo sapiens (Human).